The primary structure comprises 503 residues: Cytochrome P450 3A17 (503 aa).

Residue Cys442 coordinates heme.

The protein belongs to the cytochrome P450 family. Requires heme as cofactor.

The protein localises to the endoplasmic reticulum membrane. Its subcellular location is the microsome membrane. It carries out the reaction an organic molecule + reduced [NADPH--hemoprotein reductase] + O2 = an alcohol + oxidized [NADPH--hemoprotein reductase] + H2O + H(+). Cytochromes P450 are a group of heme-thiolate monooxygenases. In liver microsomes, this enzyme is involved in an NADPH-dependent electron transport pathway. It oxidizes a variety of structurally unrelated compounds, including steroids, fatty acids, and xenobiotics. This chain is Cytochrome P450 3A17 (CYP3A17), found in Cavia porcellus (Guinea pig).